The following is a 225-amino-acid chain: Ribosomal RNA small subunit methyltransferase G (225 aa).

S-adenosyl-L-methionine-binding positions include G96, F101, 146–147 (AE), and R160.

Belongs to the methyltransferase superfamily. RNA methyltransferase RsmG family.

It localises to the cytoplasm. In terms of biological role, specifically methylates the N7 position of a guanine in 16S rRNA. The polypeptide is Ribosomal RNA small subunit methyltransferase G (Mycoplasma mobile (strain ATCC 43663 / 163K / NCTC 11711) (Mesomycoplasma mobile)).